The chain runs to 1426 residues: Nephrocystin-4 (1426 aa).

Residue S142 is modified to Phosphoserine. Disordered regions lie at residues 450-536 (GSEE…SPAQ) and 896-935 (RQGKGPQDVSRESDATRRRKLERMRSVRLQEAGGDLGRRG). Over residues 474 to 486 (KPPTSPSSPPAPV) the composition is skewed to pro residues. Polar residues predominate over residues 503-536 (SISQLAASPRSPTQHCLARPTSQLPHGSQASPAQ). The interval 823–1426 (LTLANVGHPC…EAFCVKVIYQ (604 aa)) is sufficient for basal bodies localization.

The protein belongs to the NPHP4 family. Interacts with NPHP1. Interacts with NPHP1 and RPGRIP1L/NPHP8; NPHP1, NPHP4 and RPGRIP1L are proposed to form a functional NPHP1-4-8 module localized to cell-cell contacts and the ciliary transition zone; NPHP4 mediates the interaction between NPHP1 and RPGRIP1L. Interacts with IQCB1/NPHP5; the interaction likely requires additional interactors. Interacts with RPGRIP1, CEP164, JADE1, PALS1, INADL, PARD6A, INVS, DVL2, LATS1. Interacts with INTU; INTU mediates the interaction between NPHP4 and DAAM1. Interacts with SPATA7. Expressed in kidney, skeletal muscle, heart and liver, and to a lesser extent in brain and lung.

The protein resides in the cytoplasm. The protein localises to the cytoskeleton. It is found in the cilium basal body. Its subcellular location is the microtubule organizing center. It localises to the centrosome. The protein resides in the cell junction. The protein localises to the tight junction. It is found in the nucleus. Its function is as follows. Involved in the organization of apical junctions; the function is proposed to implicate a NPHP1-4-8 module. Does not seem to be strictly required for ciliogenesis. Required for building functional cilia. Involved in the organization of the subapical actin network in multiciliated epithelial cells. Seems to recruit INT to basal bodies of motile cilia which subsequently interacts with actin-modifying proteins such as DAAM1. In cooperation with INVS may down-regulate the canonical Wnt pathway and promote the Wnt-PCP pathway by regulating expression and subcellular location of disheveled proteins. Stabilizes protein levels of JADE1 and promotes its translocation to the nucleus leading to cooperative inhibition of canonical Wnt signaling. Acts as a negative regulator of the hippo pathway by association with LATS1 and modifying LATS1-dependent phosphorylation and localization of WWTR1/TAZ. This Homo sapiens (Human) protein is Nephrocystin-4 (NPHP4).